A 222-amino-acid polypeptide reads, in one-letter code: N-acetyltransferase 8F1 (222 aa).

Residues 53–73 (LVLVSGSWILAVICIFFLLLL) traverse the membrane as a helical segment. The N-acetyltransferase domain occupies 69–220 (FLLLLLRLLA…CTIQLKYSFP (152 aa)).

This sequence belongs to the camello family.

The protein localises to the membrane. Its function is as follows. May play a role in regulation of gastrulation. The polypeptide is N-acetyltransferase 8F1 (Mus musculus (Mouse)).